The following is a 627-amino-acid chain: Hemocyanin D chain (627 aa).

Positions 171, 175, 202, 322, 326, and 362 each coordinate Cu cation. Asparagine 445 is a glycosylation site (N-linked (GlcNAc...) asparagine). The cysteines at positions 531 and 579 are disulfide-linked.

It belongs to the tyrosinase family. Hemocyanin subfamily. Tarantula hemocyanin is a 24-chain polymer with seven different chains identified. Hemolymph.

The protein localises to the secreted. Its subcellular location is the extracellular space. Hemocyanins are copper-containing oxygen carriers occurring freely dissolved in the hemolymph of many mollusks and arthropods. This Aphonopelma sp. (American tarantula) protein is Hemocyanin D chain (HCD).